The chain runs to 125 residues: Small ribosomal subunit protein eS26 (125 aa).

This sequence belongs to the eukaryotic ribosomal protein eS26 family.

The sequence is that of Small ribosomal subunit protein eS26 (RPS26) from Sterkiella nova (Ciliate).